The chain runs to 251 residues: Large ribosomal subunit protein uL16m (251 aa).

The N-terminal 29 residues, 1–29, are a transit peptide targeting the mitochondrion; that stretch reads MWRLLTRAPAPLWRMHFSDTWAALPTSAG.

It belongs to the universal ribosomal protein uL16 family. In terms of assembly, component of the mitochondrial ribosome large subunit (39S) which comprises a 16S rRNA and about 50 distinct proteins.

The protein resides in the mitochondrion. This is Large ribosomal subunit protein uL16m (Mrpl16) from Rattus norvegicus (Rat).